The sequence spans 335 residues: S-adenosylmethionine decarboxylase proenzyme (335 aa).

Active-site residues include E12 and E15. S70 (schiff-base intermediate with substrate; via pyruvic acid) is an active-site residue. Pyruvic acid (Ser); by autocatalysis is present on S70. C84 serves as the catalytic Proton donor; for catalytic activity. Residues S231 and H245 each act as proton acceptor; for processing activity in the active site.

It belongs to the eukaryotic AdoMetDC family. Pyruvate is required as a cofactor. Is synthesized initially as an inactive proenzyme. Formation of the active enzyme involves a self-maturation process in which the active site pyruvoyl group is generated from an internal serine residue via an autocatalytic post-translational modification. Two non-identical subunits are generated from the proenzyme in this reaction, and the pyruvate is formed at the N-terminus of the alpha chain, which is derived from the carboxyl end of the proenzyme. The post-translation cleavage follows an unusual pathway, termed non-hydrolytic serinolysis, in which the side chain hydroxyl group of the serine supplies its oxygen atom to form the C-terminus of the beta chain, while the remainder of the serine residue undergoes an oxidative deamination to produce ammonia and the pyruvoyl group blocking the N-terminus of the alpha chain.

The enzyme catalyses S-adenosyl-L-methionine + H(+) = S-adenosyl 3-(methylsulfanyl)propylamine + CO2. It participates in amine and polyamine biosynthesis; S-adenosylmethioninamine biosynthesis; S-adenosylmethioninamine from S-adenosyl-L-methionine: step 1/1. Functionally, essential for biosynthesis of the polyamines spermidine and spermine. Promotes maintenance and self-renewal of embryonic stem cells, by maintaining spermine levels. The protein is S-adenosylmethionine decarboxylase proenzyme (amd1) of Xenopus laevis (African clawed frog).